The primary structure comprises 198 residues: DnaJ homolog subfamily C member 12 (198 aa).

Methionine 1 carries the N-acetylmethionine modification. The J domain occupies 14-79 (DYYALLGCDE…ESRARYDHWR (66 aa)). Residues 114–177 (EGSGQTFTSS…GLSDLNCGHL (64 aa)) are disordered. Residues 116 to 125 (SGQTFTSSVP) show a composition bias toward polar residues. Positions 126 to 156 (NKERSEQRETKKGDPDSNPEKMKQKEPKFPE) are enriched in basic and acidic residues. Phosphoserine occurs at positions 160, 166, and 182.

Interacts with HSPA8. Interacts with TPH1. Interacts with TPH2. Highest levels of expression are detected in kidney, pineal gland, and raphe nuclei in the brain where it localizes to serotonerigic neurons.

It localises to the cytoplasm. Probable co-chaperone that participates in the proper folding of biopterin-dependent aromatic amino acid hydroxylases, which include phenylalanine-4-hydroxylase (PAH), tyrosine 3-monooxygenase (TH) and peripheral and neuronal tryptophan hydroxylases (TPH1 and TPH2). This is DnaJ homolog subfamily C member 12 (Dnajc12) from Mus musculus (Mouse).